A 172-amino-acid polypeptide reads, in one-letter code: uncharacterized protein (172 aa).

The HotDog ACOT-type domain maps to 10–122 (KESKVVKTSR…FLTFVALDSN (113 aa)). The segment at 148-172 (RANERKNRKRHSQALANALGTDKPW) is disordered.

The protein belongs to the acyl coenzyme A hydrolase family.

This is an uncharacterized protein from Bacillus subtilis (strain 168).